An 827-amino-acid polypeptide reads, in one-letter code: Cytosolic Fe-S cluster assembly factor NAR1 (827 aa).

A [4Fe-4S] cluster-binding site is contributed by Cys-22. Positions 57-77 (AYYESSTPPSSSLSAADSRPR) are disordered. Residues 61–73 (SSTPPSSSLSAAD) show a composition bias toward low complexity. Cys-92, Cys-95, and Cys-98 together coordinate [4Fe-4S] cluster. The tract at residues 209 to 231 (RENARKRAKLSNAPADDDDRLHP) is disordered. Residues Cys-246, Cys-307, Cys-591, and Cys-595 each contribute to the [4Fe-4S] cluster site. Disordered regions lie at residues 599–637 (GGQI…WAAD) and 709–739 (DQGG…NAKS). Composition is skewed to polar residues over residues 604–621 (PPTQ…TVDN) and 713–738 (ANDS…SNAK).

The protein belongs to the NARF family.

Component of the cytosolic Fe/S protein assembly machinery. Required for maturation of extramitochondrial Fe/S proteins. May play a role in the transfer of pre-assembled Fe/S clusters to target apoproteins. The protein is Cytosolic Fe-S cluster assembly factor NAR1 (NAR1) of Mycosarcoma maydis (Corn smut fungus).